Here is a 369-residue protein sequence, read N- to C-terminus: Cobalt-precorrin-5B C(1)-methyltransferase (369 aa).

The protein belongs to the CbiD family.

It catalyses the reaction Co-precorrin-5B + S-adenosyl-L-methionine = Co-precorrin-6A + S-adenosyl-L-homocysteine. Its pathway is cofactor biosynthesis; adenosylcobalamin biosynthesis; cob(II)yrinate a,c-diamide from sirohydrochlorin (anaerobic route): step 6/10. Functionally, catalyzes the methylation of C-1 in cobalt-precorrin-5B to form cobalt-precorrin-6A. This Methanococcus vannielii (strain ATCC 35089 / DSM 1224 / JCM 13029 / OCM 148 / SB) protein is Cobalt-precorrin-5B C(1)-methyltransferase.